Reading from the N-terminus, the 475-residue chain is Trifunctional enzyme subunit beta, mitochondrial (475 aa).

The transit peptide at 1 to 34 (MTTILTSTFRNLSTTSKWALRSSIRPLSCSSQLH) directs the protein to the mitochondrion. Lys-53 carries the N6-succinyllysine modification. Lys-73 carries the N6-acetyllysine; alternate modification. Lys-73 is modified (N6-succinyllysine; alternate). Cys-139 functions as the Acyl-thioester intermediate in the catalytic mechanism. Residues 174–221 (IRHSRNMRKMMLDLNKAKTLGQRLSLLSKFRLNFLSPELPAVAEFSTN) lie within the membrane without spanning it. Position 189 is an N6-acetyllysine; alternate (Lys-189). Lys-189 bears the N6-succinyllysine; alternate mark. Residues Lys-191, Lys-273, and Lys-292 each carry the N6-succinyllysine modification. The residue at position 294 (Lys-294) is an N6-acetyllysine; alternate. N6-succinyllysine; alternate is present on Lys-294. Lys-299 carries the N6-acetyllysine modification. Lys-333 is modified (N6-acetyllysine; alternate). Lys-333 bears the N6-succinyllysine; alternate mark. N6-acetyllysine occurs at positions 349 and 362. Cys-459 acts as the Proton donor/acceptor in catalysis.

The protein belongs to the thiolase-like superfamily. Thiolase family. As to quaternary structure, heterotetramer of 2 alpha/HADHA and 2 beta/HADHB subunits; forms the mitochondrial trifunctional enzyme. Also purified as higher order heterooligomers including a 4 alpha/HADHA and 4 beta/HADHB heterooligomer which physiological significance remains unclear. The mitochondrial trifunctional enzyme interacts with MTLN. Interacts with RSAD2/viperin. In terms of processing, acetylation of Lys-202 is observed in liver mitochondria from fasted mice but not from fed mice.

It localises to the mitochondrion. Its subcellular location is the mitochondrion inner membrane. The protein localises to the mitochondrion outer membrane. It is found in the endoplasmic reticulum. The enzyme catalyses an acyl-CoA + acetyl-CoA = a 3-oxoacyl-CoA + CoA. The catalysed reaction is butanoyl-CoA + acetyl-CoA = 3-oxohexanoyl-CoA + CoA. It catalyses the reaction hexanoyl-CoA + acetyl-CoA = 3-oxooctanoyl-CoA + CoA. It carries out the reaction octanoyl-CoA + acetyl-CoA = 3-oxodecanoyl-CoA + CoA. The enzyme catalyses decanoyl-CoA + acetyl-CoA = 3-oxododecanoyl-CoA + CoA. The catalysed reaction is dodecanoyl-CoA + acetyl-CoA = 3-oxotetradecanoyl-CoA + CoA. It catalyses the reaction tetradecanoyl-CoA + acetyl-CoA = 3-oxohexadecanoyl-CoA + CoA. It functions in the pathway lipid metabolism; fatty acid beta-oxidation. In terms of biological role, mitochondrial trifunctional enzyme catalyzes the last three of the four reactions of the mitochondrial beta-oxidation pathway. The mitochondrial beta-oxidation pathway is the major energy-producing process in tissues and is performed through four consecutive reactions breaking down fatty acids into acetyl-CoA. Among the enzymes involved in this pathway, the trifunctional enzyme exhibits specificity for long-chain fatty acids. Mitochondrial trifunctional enzyme is a heterotetrameric complex composed of two proteins, the trifunctional enzyme subunit alpha/HADHA carries the 2,3-enoyl-CoA hydratase and the 3-hydroxyacyl-CoA dehydrogenase activities, while the trifunctional enzyme subunit beta/HADHB described here bears the 3-ketoacyl-CoA thiolase activity. The protein is Trifunctional enzyme subunit beta, mitochondrial (Hadhb) of Mus musculus (Mouse).